Reading from the N-terminus, the 153-residue chain is D-aminoacyl-tRNA deacylase (153 aa).

The short motif at 140–141 is the Gly-cisPro motif, important for rejection of L-amino acids element; sequence GP.

It belongs to the DTD family. In terms of assembly, homodimer.

The protein localises to the cytoplasm. The enzyme catalyses glycyl-tRNA(Ala) + H2O = tRNA(Ala) + glycine + H(+). It carries out the reaction a D-aminoacyl-tRNA + H2O = a tRNA + a D-alpha-amino acid + H(+). In terms of biological role, an aminoacyl-tRNA editing enzyme that deacylates mischarged D-aminoacyl-tRNAs. Also deacylates mischarged glycyl-tRNA(Ala), protecting cells against glycine mischarging by AlaRS. Acts via tRNA-based rather than protein-based catalysis; rejects L-amino acids rather than detecting D-amino acids in the active site. By recycling D-aminoacyl-tRNA to D-amino acids and free tRNA molecules, this enzyme counteracts the toxicity associated with the formation of D-aminoacyl-tRNA entities in vivo and helps enforce protein L-homochirality. In Trichodesmium erythraeum (strain IMS101), this protein is D-aminoacyl-tRNA deacylase.